We begin with the raw amino-acid sequence, 473 residues long: Probable cytosolic iron-sulfur protein assembly protein 1 (473 aa).

The disordered stretch occupies residues M1–W25. 2 WD repeats span residues K11–T58 and G62–E104. Residues G112–D133 are disordered. Positions D123 to D133 are enriched in acidic residues. WD repeat units lie at residues G144–F183, E191–V230, G235–P313, and M341–V380. Residues K377–P405 form a disordered region. Over residues S384–G400 the composition is skewed to basic and acidic residues. A WD 7 repeat occupies S438–R473.

Belongs to the WD repeat CIA1 family.

Functionally, essential component of the cytosolic iron-sulfur (Fe/S) protein assembly machinery. Required for the maturation of extramitochondrial Fe/S proteins. This chain is Probable cytosolic iron-sulfur protein assembly protein 1, found in Coccidioides immitis (strain RS) (Valley fever fungus).